We begin with the raw amino-acid sequence, 283 residues long: Fructose-1,6-bisphosphatase class 1 (283 aa).

4 residues coordinate Mg(2+): Glu-67, Asp-86, Leu-88, and Asp-89. Substrate is bound by residues 89-92 (DGSS), Tyr-195, and Lys-225. A Mg(2+)-binding site is contributed by Glu-231.

The protein belongs to the FBPase class 1 family. In terms of assembly, homotetramer. The cofactor is Mg(2+).

The protein resides in the cytoplasm. The catalysed reaction is beta-D-fructose 1,6-bisphosphate + H2O = beta-D-fructose 6-phosphate + phosphate. It participates in carbohydrate biosynthesis; gluconeogenesis. This chain is Fructose-1,6-bisphosphatase class 1, found in Natronomonas pharaonis (strain ATCC 35678 / DSM 2160 / CIP 103997 / JCM 8858 / NBRC 14720 / NCIMB 2260 / Gabara) (Halobacterium pharaonis).